The sequence spans 357 residues: Peptide chain release factor 1 (357 aa).

An N5-methylglutamine modification is found at glutamine 234.

The protein belongs to the prokaryotic/mitochondrial release factor family. Methylated by PrmC. Methylation increases the termination efficiency of RF1.

The protein localises to the cytoplasm. Its function is as follows. Peptide chain release factor 1 directs the termination of translation in response to the peptide chain termination codons UAG and UAA. In Lactococcus lactis subsp. cremoris (strain SK11), this protein is Peptide chain release factor 1.